We begin with the raw amino-acid sequence, 525 residues long: GMP synthase [glutamine-hydrolyzing] (525 aa).

Residues 9–207 (RILILDFGSQ…VRDICQCEAL (199 aa)) form the Glutamine amidotransferase type-1 domain. C86 serves as the catalytic Nucleophile. Active-site residues include H181 and E183. The 193-residue stretch at 208 to 400 (WTPAKIIDDA…LGLPYDMLYR (193 aa)) folds into the GMPS ATP-PPase domain. 235–241 (SGGVDSS) is an ATP binding site.

In terms of assembly, homodimer.

It catalyses the reaction XMP + L-glutamine + ATP + H2O = GMP + L-glutamate + AMP + diphosphate + 2 H(+). It functions in the pathway purine metabolism; GMP biosynthesis; GMP from XMP (L-Gln route): step 1/1. In terms of biological role, catalyzes the synthesis of GMP from XMP. The chain is GMP synthase [glutamine-hydrolyzing] from Enterobacter sp. (strain 638).